The chain runs to 314 residues: 2,3-dihydroxyphenylpropionate/2,3-dihydroxicinnamic acid 1,2-dioxygenase (314 aa).

His115 serves as the catalytic Proton donor. The Proton acceptor role is filled by His179.

This sequence belongs to the LigB/MhpB extradiol dioxygenase family. Homotetramer. Fe(2+) is required as a cofactor.

The enzyme catalyses 3-(2,3-dihydroxyphenyl)propanoate + O2 = (2Z,4E)-2-hydroxy-6-oxonona-2,4-dienedioate + H(+). It catalyses the reaction (2E)-3-(2,3-dihydroxyphenyl)prop-2-enoate + O2 = (2Z,4E,7E)-2-hydroxy-6-oxonona-2,4,7-trienedioate + H(+). Its pathway is aromatic compound metabolism; 3-phenylpropanoate degradation. Catalyzes the non-heme iron(II)-dependent oxidative cleavage of 2,3-dihydroxyphenylpropionic acid and 2,3-dihydroxicinnamic acid into 2-hydroxy-6-ketononadienedioate and 2-hydroxy-6-ketononatrienedioate, respectively. The sequence is that of 2,3-dihydroxyphenylpropionate/2,3-dihydroxicinnamic acid 1,2-dioxygenase from Klebsiella pneumoniae subsp. pneumoniae (strain ATCC 700721 / MGH 78578).